The sequence spans 665 residues: Phenol hydroxylase (665 aa).

Residues Pro-18–Ala-19, Asp-43–Arg-45, Asn-51–Gly-56, Gln-118, Tyr-290, Asp-358, and Gly-368–Asn-372 each bind FAD. Asp-55 contacts substrate. Tyr-290 contributes to the substrate binding site.

The protein belongs to the PheA/TfdB FAD monooxygenase family. As to quaternary structure, homodimer. It depends on FAD as a cofactor.

It catalyses the reaction phenol + NADPH + O2 + H(+) = catechol + NADP(+) + H2O. Its pathway is aromatic compound metabolism; phenol degradation. Its activity is regulated as follows. Inhibited by excess phenol. Heavy metals such AsCuSO(4), AgNO(3), or HgCl(2) severely inhibit activity. Hydroxylates phenol to catechol. Phenol is the best substrate, but the enzyme also accepts isomeric diphenols, hydroxyl-, amino-, halogen- or methyl-substituted phenols and, to a lesser degree, cresols. This is Phenol hydroxylase from Cutaneotrichosporon cutaneum (Yeast).